Reading from the N-terminus, the 5005-residue chain is Bridge-like lipid transfer protein family member 1 (5005 aa).

A helical transmembrane segment spans residues 26-46 (NVVWLLVATILSCGWIIYLTY). Disordered stretches follow at residues 691–721 (LRPS…LPPD), 1218–1257 (LSLQ…SSVA), and 1269–1310 (GTKR…LKRQ). 2 stretches are compositionally biased toward low complexity: residues 700 to 711 (RVVSSPSTSSRP) and 1226 to 1240 (SHSS…SSSS). Positions 1248 to 1257 (GEKESPSSVA) are enriched in basic and acidic residues. The span at 1278–1303 (SIPTEISGNSPVSPNTQDKSVGQSPL) shows a compositional bias: polar residues. 3 positions are modified to phosphoserine: Ser-1301, Ser-1305, and Ser-1323. Residue Thr-1325 is modified to Phosphothreonine. Disordered stretches follow at residues 1343–1376 (SDVS…SNSF), 1400–1427 (EFEP…QQID), 1521–1548 (TNKR…SSSF), and 1676–1704 (FSEN…QGQA). A phosphoserine mark is found at Ser-1355 and Ser-1406. Over residues 1521 to 1530 (TNKRTSKSSL) the composition is skewed to basic residues. The span at 1691 to 1704 (TEQSTIGTTNQGQA) shows a compositional bias: polar residues. A phosphoserine mark is found at Ser-1805 and Ser-1808. 3 disordered regions span residues 1924 to 1991 (DTER…PLMP), 2401 to 2420 (SDQN…QDDV), and 2598 to 2677 (TAGS…KDVV). Polar residues-rich tracts occupy residues 1931–1948 (LTSN…YNTD), 1959–1971 (TSPS…NSVS), 2401–2418 (SDQN…TSQD), and 2598–2608 (TAGSASPTPTF). Residues Ser-2601 and Ser-2603 each carry the phosphoserine modification. Positions 2619 to 2638 (SDFSRSSRGSLNGGNRVNNA) are enriched in low complexity. A compositionally biased stretch (basic and acidic residues) spans 2643–2665 (TNNENNKKESRNKNSLGRSERRT). Ser-2755 carries the phosphoserine modification. The interval 2928–2967 (RQPSTAPQPVKEDIATPLPSEKTPTSVNQTPVETNEFPQL) is disordered. The segment covering 2949 to 2964 (KTPTSVNQTPVETNEF) has biased composition (polar residues). The residue at position 3562 (Ser-3562) is a Phosphoserine. The segment covering 3612-3622 (PSYSRSKSISA) has biased composition (polar residues). 6 disordered regions span residues 3612–3661 (PSYS…VTFN), 3686–3744 (SSNS…ERFY), 3821–3843 (RRSY…KKFQ), 3914–3954 (YGMK…KGKG), 4088–4146 (GTTY…SSSS), and 4325–4394 (QSAS…KAAS). Phosphoserine is present on Ser-3653. A compositionally biased stretch (polar residues) spans 3686 to 3700 (SSNSEGSCSVFSSPK). Over residues 3727–3736 (EDSEKDEKDE) the composition is skewed to acidic residues. Residues 3821–3837 (RRSYDRSSRSLDQDSPS) show a composition bias toward basic and acidic residues. Polar residues-rich tracts occupy residues 3931 to 3940 (TVQSKTNTLL) and 4098 to 4113 (PGGN…SASK). Residues 4122-4146 (LGSPLGRSRHSSSQSDLTSSSSSSS) show a composition bias toward low complexity. Residue Ser-4124 is modified to Phosphoserine. Positions 4325–4358 (QSASFTHMPQSPNVFNEHMTNSTMSPGTVGQSLK) are enriched in polar residues. Positions 4359–4372 (SPASIRSRSVSDSS) are enriched in low complexity. A compositionally biased stretch (polar residues) spans 4381–4394 (KTSTPFNKSNKAAS).

In terms of tissue distribution, highly expressed in testis and ovary. Weakly or not expressed in other tissues.

It is found in the cell membrane. The protein resides in the endoplasmic reticulum membrane. Its subcellular location is the mitochondrion membrane. Tube-forming lipid transport protein which provides phosphatidylethanolamine for glycosylphosphatidylinositol (GPI) anchor synthesis in the endoplasmic reticulum. Plays a role in endosomal trafficking and endosome recycling. Also involved in the actin cytoskeleton and cilia structural dynamics. Acts as a regulator of phagocytosis. The protein is Bridge-like lipid transfer protein family member 1 of Homo sapiens (Human).